The primary structure comprises 185 residues: MKTRMIIVAAPSGAGKSSFVERITREDSRLVDIVTFTTRSIRQGETPGLQYNFIDHADFEQKIKEGFFVEWAKVHTNFYGTSYSSLETAWNQGKTAIMDIDIQGVATFKSKFPDAKTVFIHPPSIDELRRRIEKRDGKVPADIEVRMANAEKEIREASKFDYQIVNDVFEKSYGEFKKIVEDLLA.

Positions 3–181 (TRMIIVAAPS…SYGEFKKIVE (179 aa)) constitute a Guanylate kinase-like domain. 10-17 (APSGAGKS) is an ATP binding site.

Belongs to the guanylate kinase family.

Its subcellular location is the cytoplasm. The enzyme catalyses GMP + ATP = GDP + ADP. Essential for recycling GMP and indirectly, cGMP. The sequence is that of Guanylate kinase from Bdellovibrio bacteriovorus (strain ATCC 15356 / DSM 50701 / NCIMB 9529 / HD100).